Reading from the N-terminus, the 56-residue chain is MAVPKKKKSKSKRNQRHAVWKGKAAIAAQKAISLGKSILTGKAQGFVYPIEEEEEE.

Belongs to the bacterial ribosomal protein bL32 family.

The sequence is that of Large ribosomal subunit protein bL32 from Prochlorococcus marinus (strain MIT 9215).